The primary structure comprises 290 residues: 4-hydroxy-tetrahydrodipicolinate synthase (290 aa).

T44 contacts pyruvate. Y132 serves as the catalytic Proton donor/acceptor. K160 (schiff-base intermediate with substrate) is an active-site residue. I202 is a binding site for pyruvate.

Belongs to the DapA family. In terms of assembly, homotetramer; dimer of dimers.

It is found in the cytoplasm. It catalyses the reaction L-aspartate 4-semialdehyde + pyruvate = (2S,4S)-4-hydroxy-2,3,4,5-tetrahydrodipicolinate + H2O + H(+). It participates in amino-acid biosynthesis; L-lysine biosynthesis via DAP pathway; (S)-tetrahydrodipicolinate from L-aspartate: step 3/4. Catalyzes the condensation of (S)-aspartate-beta-semialdehyde [(S)-ASA] and pyruvate to 4-hydroxy-tetrahydrodipicolinate (HTPA). The chain is 4-hydroxy-tetrahydrodipicolinate synthase from Trichlorobacter lovleyi (strain ATCC BAA-1151 / DSM 17278 / SZ) (Geobacter lovleyi).